Here is a 441-residue protein sequence, read N- to C-terminus: Ribosomal protein uS12 methylthiotransferase RimO (441 aa).

The MTTase N-terminal domain occupies 8-118 (PKIGFVSLGC…VLEHVHHYVP (111 aa)). C17, C53, C82, C150, C154, and C157 together coordinate [4Fe-4S] cluster. The Radical SAM core domain occupies 136–373 (LTPRHYAYLK…MQLQQQISAE (238 aa)). A TRAM domain is found at 376-441 (QEKVGREILV…DEYDLWGSRV (66 aa)).

The protein belongs to the methylthiotransferase family. RimO subfamily. [4Fe-4S] cluster is required as a cofactor.

It localises to the cytoplasm. It catalyses the reaction L-aspartate(89)-[ribosomal protein uS12]-hydrogen + (sulfur carrier)-SH + AH2 + 2 S-adenosyl-L-methionine = 3-methylsulfanyl-L-aspartate(89)-[ribosomal protein uS12]-hydrogen + (sulfur carrier)-H + 5'-deoxyadenosine + L-methionine + A + S-adenosyl-L-homocysteine + 2 H(+). Its function is as follows. Catalyzes the methylthiolation of an aspartic acid residue of ribosomal protein uS12. This Escherichia coli (strain SMS-3-5 / SECEC) protein is Ribosomal protein uS12 methylthiotransferase RimO.